A 120-amino-acid chain; its full sequence is Large ribosomal subunit protein uL18 (120 aa).

Residues 1–20 are compositionally biased toward basic residues; that stretch reads MKSTRKSATQRRHRRLRRHL. The disordered stretch occupies residues 1–26; it reads MKSTRKSATQRRHRRLRRHLSGTSER.

It belongs to the universal ribosomal protein uL18 family. In terms of assembly, part of the 50S ribosomal subunit; part of the 5S rRNA/L5/L18/L25 subcomplex. Contacts the 5S and 23S rRNAs.

This is one of the proteins that bind and probably mediate the attachment of the 5S RNA into the large ribosomal subunit, where it forms part of the central protuberance. The sequence is that of Large ribosomal subunit protein uL18 from Synechocystis sp. (strain ATCC 27184 / PCC 6803 / Kazusa).